We begin with the raw amino-acid sequence, 544 residues long: Methionine--tRNA ligase 2 (544 aa).

The 'HIGH' region signature appears at 10–20 (PYANGSLHLGH). Residues Cys-141, Cys-144, Cys-153, and Cys-156 each coordinate Zn(2+). Positions 329–333 (KLSTS) match the 'KMSKS' region motif. An ATP-binding site is contributed by Thr-332.

Belongs to the class-I aminoacyl-tRNA synthetase family. MetG type 1 subfamily. As to quaternary structure, monomer. Zn(2+) is required as a cofactor.

The protein resides in the cytoplasm. The catalysed reaction is tRNA(Met) + L-methionine + ATP = L-methionyl-tRNA(Met) + AMP + diphosphate. Its function is as follows. Is required not only for elongation of protein synthesis but also for the initiation of all mRNA translation through initiator tRNA(fMet) aminoacylation. In Bacillus anthracis, this protein is Methionine--tRNA ligase 2.